A 420-amino-acid polypeptide reads, in one-letter code: UPF0053 protein HI_0107 (420 aa).

The CNNM transmembrane domain occupies Asp-2 to Pro-190. The next 4 membrane-spanning stretches (helical) occupy residues Ser-3 to Phe-23, Phe-65 to Gly-85, Ala-92 to Phe-112, and Phe-126 to Met-146. CBS domains are found at residues Met-208–Phe-268 and Leu-273–Ser-333.

The protein belongs to the UPF0053 family.

The protein resides in the cell membrane. The sequence is that of UPF0053 protein HI_0107 from Haemophilus influenzae (strain ATCC 51907 / DSM 11121 / KW20 / Rd).